The sequence spans 665 residues: MWLFLGIAGLLTAVLSGLPSPAPSGQHKNGTIPNMTLDLEERLGIRLVNGSSRCSGSVKVLLESWEPVCAAHWNRAATEAVCKALNCGDSGKVTYLMPPTSELPPGATSGNTSSAGNTTWARAPTERCRGANWQFCKVQDQECSSDRRLVWVTCAENQAVRLVDGSSRCAGRVEMLEHGEWGTVCDDTWDLQDAHVVCKQLKCGWAVKALAGLHFTPGQGPIHRDQVNCSGTEAYLWDCPGRPGDQYCGHKEDAGVVCSEHQSWRLTGGIDSCEGQVEVYFRGVWSTVCDSEWYPSEAKVLCRSLGCGSAVARPRGLPHSLDGRMYYSCKGQEPALSTCSWRFNNSNLCSQSRAARVVCSGSQRHLNLSTSEVPSRVPVTIESSVPVSVKDKDSQGLTLLILCIVLGILLLVSTIFIVILLLRAKGQYALPASVNHQQLSTANQAGINNYHPVPITIAKEAPMLFIQPRVPADSDSSSDSDYEHYDFSSQPPVALTTFYNSQRHRVTEEEAQQNRFQMPPLEEGLEELHVSHIPAADPRPCVADVPSRGSQYHVRNNSDSSTSSEEGYCNDPSSKPPPWNSQAFYSEKSPLTEQPPNLELAGSPAVFSGPSADDSSSTSSGEWYQNFQPPPQHPPAEQFECPGPPGPQTDSIDDDEEDYDDIGAA.

Positions 1–16 (MWLFLGIAGLLTAVLS) are cleaved as a signal peptide. The Extracellular portion of the chain corresponds to 17 to 398 (GLPSPAPSGQ…VKDKDSQGLT (382 aa)). N-linked (GlcNAc...) asparagine glycans are attached at residues Asn29, Asn34, and Asn49. 3 SRCR domains span residues 45–155 (IRLV…VTCA), 160–259 (VRLV…VVCS), and 264–360 (WRLT…VVCS). Cystine bridges form between Cys54/Cys87, Cys69/Cys143, Cys82/Cys154, Cys128/Cys136, Cys169/Cys203, Cys185/Cys248, Cys198/Cys258, Cys229/Cys239, Cys289/Cys349, Cys302/Cys359, and Cys329/Cys339. 2 N-linked (GlcNAc...) asparagine glycosylation sites follow: Asn111 and Asn117. Asn228 is a glycosylation site (N-linked (GlcNAc...) asparagine). N-linked (GlcNAc...) asparagine glycosylation is found at Asn344 and Asn367. A helical transmembrane segment spans residues 399–419 (LLILCIVLGILLLVSTIFIVI). Residues 420 to 665 (LLLRAKGQYA…EEDYDDIGAA (246 aa)) are Cytoplasmic-facing. A disordered region spans residues 536 to 665 (ADPRPCVADV…EEDYDDIGAA (130 aa)). 2 stretches are compositionally biased toward polar residues: residues 548-565 (RGSQ…TSSE) and 580-595 (NSQA…TEQP). Residues 608–621 (SGPSADDSSSTSSG) show a composition bias toward low complexity. Acidic residues predominate over residues 651 to 665 (SIDDDEEDYDDIGAA). At Tyr659 the chain carries Phosphotyrosine.

As to quaternary structure, interacts (via extracellular domain) with ALCAM/CD166 (via extracellular domain). Interacts with the TCR/CD3 complex subunit CD3E. Interacts (via tyrosine phosphorylated C-terminus) with LCP2 (via SH2 domain). Interacts (via glycosylated extracellular domain) with LGALS1 and LGALS3. Interaction with LGALS1 or LGALS3 inhibits interaction with ALCAM. Interacts with VAV1. In terms of processing, after T-cell activation, becomes hyperphosphorylated on Ser and Thr residues. Phosphorylated on tyrosine residues in response to stimulation of the TCR complex. Glycosylated. Expressed predominantly in thymus, lymph node and spleen.

Its subcellular location is the cell membrane. Functionally, cell adhesion molecule that mediates cell-cell contacts and regulates T-cell responses via its interaction with ALCAM/CD166. Contributes to signaling cascades triggered by activation of the TCR/CD3 complex. Functions as a costimulatory molecule; promotes T-cell activation and proliferation. Contributes to the formation and maturation of the immunological synapse. Functions as a calcium-dependent pattern receptor that binds and aggregates both Gram-positive and Gram-negative bacteria. Binds both lipopolysaccharide (LPS) from Gram-negative bacteria and lipoteichoic acid from Gram-positive bacteria. LPS binding leads to the activation of signaling cascades and down-stream MAP kinases. Mediates activation of the inflammatory response and the secretion of pro-inflammatory cytokines in response to LPS. This Mus musculus (Mouse) protein is T-cell differentiation antigen CD6 (Cd6).